Here is a 164-residue protein sequence, read N- to C-terminus: Reticulon-like protein B22 (164 aa).

Positions 1–164 (MGEMGKAMGL…ILEQEAHSDT (164 aa)) constitute a Reticulon domain. The next 2 helical transmembrane spans lie at 30 to 50 (SLFSDVFIVLLCSLAILGLLF) and 117 to 137 (LISGVTVAYAGLCLFCLSMLC).

Its subcellular location is the endoplasmic reticulum membrane. The polypeptide is Reticulon-like protein B22 (RTNLB22) (Arabidopsis thaliana (Mouse-ear cress)).